Reading from the N-terminus, the 97-residue chain is uncharacterized protein (97 aa).

A run of 3 helical transmembrane segments spans residues 7-27, 34-54, and 69-89; these read CIAPLIYLVFGVSSTWLIGLG, IPMLIISLCAFAYGFWLLMFS, and IVLYWIVFIVMIFFLTYPTIL.

The protein resides in the cell membrane. This is an uncharacterized protein from Haemophilus influenzae (strain ATCC 51907 / DSM 11121 / KW20 / Rd).